A 452-amino-acid chain; its full sequence is Lipase member H (452 aa).

An N-terminal signal peptide occupies residues 1-16 (MLRFYLFISLLCLVRS). Residues asparagine 50, asparagine 66, and asparagine 122 are each glycosylated (N-linked (GlcNAc...) asparagine). Catalysis depends on serine 154, which acts as the Nucleophile. Aspartate 178 (charge relay system) is an active-site residue. Cysteine 233 and cysteine 247 are disulfide-bonded. Histidine 249 serves as the catalytic Charge relay system. Asparagine 263 is a glycosylation site (N-linked (GlcNAc...) asparagine). 3 cysteine pairs are disulfide-bonded: cysteine 271-cysteine 282, cysteine 285-cysteine 293, and cysteine 428-cysteine 447.

The protein belongs to the AB hydrolase superfamily. Lipase family. In terms of assembly, interacts with TTMP/C3orf52. Expressed in liver and lacrimal gland.

The protein localises to the secreted. It localises to the cell membrane. The enzyme catalyses 1-hexadecanoyl-2-(9Z-octadecenoyl)-sn-glycero-3-phosphate + H2O = 2-(9Z-octadecenoyl)-sn-glycero-3-phosphate + hexadecanoate + H(+). Functionally, hydrolyzes specifically phosphatidic acid (PA) to produce 2-acyl lysophosphatidic acid (LPA; a potent bioactive lipid mediator) and fatty acid. Does not hydrolyze other phospholipids, like phosphatidylserine (PS), phosphatidylcholine (PC) and phosphatidylethanolamine (PE) or triacylglycerol (TG). The sequence is that of Lipase member H (LIPH) from Oryctolagus cuniculus (Rabbit).